The sequence spans 312 residues: Structure-specific endonuclease subunit SLX1 (312 aa).

One can recognise a GIY-YIG domain in the interval 9 to 92 (DFYGCYLLQS…QHGYQTRYIK (84 aa)). The SLX1-type zinc-finger motif lies at 219 to 282 (CQFCNKIIKH…IPQSPKCPKC (64 aa)).

The protein belongs to the SLX1 family. As to quaternary structure, forms a heterodimer with SLX4. The cofactor is a divalent metal cation.

The protein localises to the nucleus. Functionally, catalytic subunit of the SLX1-SLX4 structure-specific endonuclease that resolves DNA secondary structures generated during DNA repair and recombination. Has endonuclease activity towards branched DNA substrates, introducing single-strand cuts in duplex DNA close to junctions with ss-DNA. The chain is Structure-specific endonuclease subunit SLX1 from Candida glabrata (strain ATCC 2001 / BCRC 20586 / JCM 3761 / NBRC 0622 / NRRL Y-65 / CBS 138) (Yeast).